We begin with the raw amino-acid sequence, 415 residues long: tRNA(Met) cytidine acetate ligase (415 aa).

Residues 7–20 (VVEYNPFHNGHRYH), Gly101, Asn162, and 187–188 (RI) contribute to the ATP site.

Belongs to the TmcAL family.

The protein resides in the cytoplasm. The enzyme catalyses cytidine(34) in elongator tRNA(Met) + acetate + ATP = N(4)-acetylcytidine(34) in elongator tRNA(Met) + AMP + diphosphate. Catalyzes the formation of N(4)-acetylcytidine (ac(4)C) at the wobble position of elongator tRNA(Met), using acetate and ATP as substrates. First activates an acetate ion to form acetyladenylate (Ac-AMP) and then transfers the acetyl group to tRNA to form ac(4)C34. This Bacillus velezensis (strain DSM 23117 / BGSC 10A6 / LMG 26770 / FZB42) (Bacillus amyloliquefaciens subsp. plantarum) protein is tRNA(Met) cytidine acetate ligase.